Reading from the N-terminus, the 514-residue chain is 2,3-bisphosphoglycerate-independent phosphoglycerate mutase (514 aa).

2 residues coordinate Mn(2+): Asp14 and Ser64. The active-site Phosphoserine intermediate is the Ser64. Residues His125, 155 to 156 (RD), Arg187, Arg193, 263 to 266 (RADR), and Lys337 contribute to the substrate site. The Mn(2+) site is built by Asp404, His408, Asp445, His446, and His463.

Belongs to the BPG-independent phosphoglycerate mutase family. In terms of assembly, monomer. Requires Mn(2+) as cofactor.

The enzyme catalyses (2R)-2-phosphoglycerate = (2R)-3-phosphoglycerate. Its pathway is carbohydrate degradation; glycolysis; pyruvate from D-glyceraldehyde 3-phosphate: step 3/5. Functionally, catalyzes the interconversion of 2-phosphoglycerate and 3-phosphoglycerate. The sequence is that of 2,3-bisphosphoglycerate-independent phosphoglycerate mutase from Hahella chejuensis (strain KCTC 2396).